The primary structure comprises 349 residues: Phosphoribosylformylglycinamidine cyclo-ligase (349 aa).

This sequence belongs to the AIR synthase family.

The protein resides in the cytoplasm. The catalysed reaction is 2-formamido-N(1)-(5-O-phospho-beta-D-ribosyl)acetamidine + ATP = 5-amino-1-(5-phospho-beta-D-ribosyl)imidazole + ADP + phosphate + H(+). The protein operates within purine metabolism; IMP biosynthesis via de novo pathway; 5-amino-1-(5-phospho-D-ribosyl)imidazole from N(2)-formyl-N(1)-(5-phospho-D-ribosyl)glycinamide: step 2/2. The chain is Phosphoribosylformylglycinamidine cyclo-ligase from Listeria monocytogenes serotype 4a (strain HCC23).